Here is a 181-residue protein sequence, read N- to C-terminus: ATP-dependent protease subunit HslV (181 aa).

T7 is an active-site residue. Na(+) contacts are provided by G166, C169, and T172.

This sequence belongs to the peptidase T1B family. HslV subfamily. As to quaternary structure, a double ring-shaped homohexamer of HslV is capped on each side by a ring-shaped HslU homohexamer. The assembly of the HslU/HslV complex is dependent on binding of ATP.

It localises to the cytoplasm. The enzyme catalyses ATP-dependent cleavage of peptide bonds with broad specificity.. Its activity is regulated as follows. Allosterically activated by HslU binding. Protease subunit of a proteasome-like degradation complex believed to be a general protein degrading machinery. The chain is ATP-dependent protease subunit HslV from Delftia acidovorans (strain DSM 14801 / SPH-1).